Consider the following 467-residue polypeptide: Proton extrusion protein PxcA (467 aa).

Positions 183 to 205 (TSPPQLIRPRTEQNKKPRGKADT) are disordered. Over residues 191–203 (PRTEQNKKPRGKA) the composition is skewed to basic and acidic residues. The next 4 helical transmembrane spans lie at 249 to 269 (FILL…ALIV), 352 to 372 (IFSV…IMVL), 391 to 411 (IIIL…WEVI), and 427 to 447 (FIFL…KYWI).

The protein belongs to the CemA family.

The protein localises to the cell inner membrane. Required for H(+) efflux immediately after light irradiation to form a rapid H(+) concentration gradient across the thylakoid membranes. Together with PxcL, contributes to transient H(+) uptake following dark to light transition. The polypeptide is Proton extrusion protein PxcA (Trichormus variabilis (strain ATCC 29413 / PCC 7937) (Anabaena variabilis)).